A 161-amino-acid polypeptide reads, in one-letter code: Ribonuclease H (161 aa).

An RNase H type-1 domain is found at 11–152 (GPRPVVIHTD…ADQLARDGLT (142 aa)). Residues Asp20, Glu58, Asp80, and Asp144 each contribute to the Mg(2+) site. The tract at residues 137–161 (HDENERADQLARDGLTENRMKSRIG) is disordered.

Belongs to the RNase H family. In terms of assembly, monomer. The cofactor is Mg(2+).

The protein resides in the cytoplasm. It carries out the reaction Endonucleolytic cleavage to 5'-phosphomonoester.. In terms of biological role, endonuclease that specifically degrades the RNA of RNA-DNA hybrids. In Rhodopseudomonas palustris (strain HaA2), this protein is Ribonuclease H.